The following is a 385-amino-acid chain: Leucine aminopeptidase 1 (385 aa).

A signal peptide spans 1 to 19; that stretch reads MKFPSFLSLGIAASTTALA. The propeptide occupies 20–87; it reads ALPDQKPIGD…FPRAFAKTAV (68 aa). Asparagine 177 carries N-linked (GlcNAc...) asparagine glycosylation. The Zn(2+) site is built by histidine 185 and aspartate 204. An N-linked (GlcNAc...) asparagine glycan is attached at asparagine 229. Glutamate 243 and aspartate 270 together coordinate Zn(2+). The cysteines at positions 319 and 323 are disulfide-linked. Histidine 352 contributes to the Zn(2+) binding site.

This sequence belongs to the peptidase M28 family. M28E subfamily. As to quaternary structure, monomer. Requires Zn(2+) as cofactor.

Its subcellular location is the secreted. Its function is as follows. Extracellular aminopeptidase that allows assimilation of proteinaceous substrates. The sequence is that of Leucine aminopeptidase 1 (LAP1) from Blastomyces gilchristii (strain SLH14081) (Blastomyces dermatitidis).